The chain runs to 475 residues: Aspartyl/glutamyl-tRNA(Asn/Gln) amidotransferase subunit B (475 aa).

This sequence belongs to the GatB/GatE family. GatB subfamily. In terms of assembly, heterotrimer of A, B and C subunits.

It catalyses the reaction L-glutamyl-tRNA(Gln) + L-glutamine + ATP + H2O = L-glutaminyl-tRNA(Gln) + L-glutamate + ADP + phosphate + H(+). It carries out the reaction L-aspartyl-tRNA(Asn) + L-glutamine + ATP + H2O = L-asparaginyl-tRNA(Asn) + L-glutamate + ADP + phosphate + 2 H(+). Functionally, allows the formation of correctly charged Asn-tRNA(Asn) or Gln-tRNA(Gln) through the transamidation of misacylated Asp-tRNA(Asn) or Glu-tRNA(Gln) in organisms which lack either or both of asparaginyl-tRNA or glutaminyl-tRNA synthetases. The reaction takes place in the presence of glutamine and ATP through an activated phospho-Asp-tRNA(Asn) or phospho-Glu-tRNA(Gln). The protein is Aspartyl/glutamyl-tRNA(Asn/Gln) amidotransferase subunit B of Agathobacter rectalis (strain ATCC 33656 / DSM 3377 / JCM 17463 / KCTC 5835 / VPI 0990) (Eubacterium rectale).